Here is a 210-residue protein sequence, read N- to C-terminus: Uracil phosphoribosyltransferase (210 aa).

5-phospho-alpha-D-ribose 1-diphosphate-binding positions include Arg78, Arg103, and 130-138 (DPMLATGGS). Residues Ile193 and 198 to 200 (GDA) each bind uracil. Asp199 serves as a coordination point for 5-phospho-alpha-D-ribose 1-diphosphate.

It belongs to the UPRTase family. Requires Mg(2+) as cofactor.

The catalysed reaction is UMP + diphosphate = 5-phospho-alpha-D-ribose 1-diphosphate + uracil. Its pathway is pyrimidine metabolism; UMP biosynthesis via salvage pathway; UMP from uracil: step 1/1. With respect to regulation, allosterically activated by GTP. Functionally, catalyzes the conversion of uracil and 5-phospho-alpha-D-ribose 1-diphosphate (PRPP) to UMP and diphosphate. The sequence is that of Uracil phosphoribosyltransferase from Salinibacter ruber (strain DSM 13855 / M31).